Reading from the N-terminus, the 128-residue chain is 3-aminoacrylate deaminase RutC (128 aa).

This sequence belongs to the RutC family.

The enzyme catalyses (Z)-3-aminoacrylate + H2O + H(+) = 3-oxopropanoate + NH4(+). Its function is as follows. Involved in pyrimidine catabolism. Catalyzes the deamination of 3-aminoacrylate to malonic semialdehyde, a reaction that can also occur spontaneously. RutC may facilitate the reaction and modulate the metabolic fitness, rather than catalyzing essential functions. This is 3-aminoacrylate deaminase RutC from Serratia proteamaculans (strain 568).